The sequence spans 252 residues: Mannose-P-dolichol utilization defect 1 protein homolog (252 aa).

Residues 34 to 100 form the PQ-loop 1 domain; sequence KALLSKGLGL…HGYPFSAWGD (67 aa). A run of 7 helical transmembrane segments spans residues 41-61, 69-89, 98-118, 126-146, 148-168, 180-200, and 207-227; these read LGLA…LKIL, INIV…SYNF, WGDS…VLFF, GLFL…LTPM, VLFT…LSQA, LSAA…FTSI, and MIIL…GQLI. Residues 157-211 form the PQ-loop 2 domain; sequence IPILLVGKLSQAYTNYQAGSTGQLSAATVIMMFAGSVARIFTSIQETGDFMIILT.

The protein belongs to the MPDU1 (TC 2.A.43.3) family.

The protein localises to the membrane. In Drosophila melanogaster (Fruit fly), this protein is Mannose-P-dolichol utilization defect 1 protein homolog.